Reading from the N-terminus, the 375-residue chain is Growth/differentiation factor 8 (375 aa).

A signal peptide spans 1-18 (MQKLQISVYIYLFMLIVA). The propeptide occupies 19–266 (GPVDLNENSE…VTDTPKRSRR (248 aa)). An N-linked (GlcNAc...) asparagine glycan is attached at Asn-71. Intrachain disulfides connect Cys-272–Cys-282, Cys-281–Cys-340, Cys-309–Cys-372, and Cys-313–Cys-374.

The protein belongs to the TGF-beta family. As to quaternary structure, homodimer; disulfide-linked. Interacts with WFIKKN2, leading to inhibit its activity. Interacts with FSTL3. In terms of processing, synthesized as large precursor molecule that undergoes proteolytic cleavage to generate an N-terminal propeptide and a disulfide linked C-terminal dimer, which is the biologically active molecule. The circulating form consists of a latent complex of the C-terminal dimer and other proteins, including its propeptide, which maintain the C-terminal dimer in a latent, inactive state. Ligand activation requires additional cleavage of the prodomain by a tolloid-like metalloproteinase.

It is found in the secreted. Its function is as follows. Acts specifically as a negative regulator of skeletal muscle growth. This chain is Growth/differentiation factor 8 (MSTN), found in Lepus capensis (Brown hare).